A 189-amino-acid polypeptide reads, in one-letter code: GTP cyclohydrolase 1 (189 aa).

Residues cysteine 80, histidine 83, and cysteine 152 each contribute to the Zn(2+) site.

The protein belongs to the GTP cyclohydrolase I family. Toroid-shaped homodecamer, composed of two pentamers of five dimers.

It catalyses the reaction GTP + H2O = 7,8-dihydroneopterin 3'-triphosphate + formate + H(+). It participates in cofactor biosynthesis; 7,8-dihydroneopterin triphosphate biosynthesis; 7,8-dihydroneopterin triphosphate from GTP: step 1/1. This Latilactobacillus sakei subsp. sakei (strain 23K) (Lactobacillus sakei subsp. sakei) protein is GTP cyclohydrolase 1.